The following is a 659-amino-acid chain: QWRF motif-containing protein 2 (659 aa).

Disordered stretches follow at residues 1–125 (MVAA…SVTV), 157–221 (SKKK…LDCG), 291–317 (DTDS…ISKS), 340–359 (RLQD…TSSI), and 371–429 (SDAV…NAYN). Positions 42-72 (SPSPSHSVSSTTTTTTTTTTTTSSSSSSSSS) are enriched in low complexity. Polar residues predominate over residues 90-102 (RSTTNSASNSIKT). Residues 172 to 190 (STPERRRSTPVRDQRENSK) are compositionally biased toward basic and acidic residues. 2 stretches are compositionally biased toward polar residues: residues 206-216 (SESVVPNSLSR) and 291-303 (DTDS…TNGV). 2 stretches are compositionally biased toward low complexity: residues 345-359 (GSPL…TSSI) and 401-418 (ATTT…SRAR). Residues 468–471 (QWRF) carry the QWRF motif motif.

It belongs to the QWRF family.

The chain is QWRF motif-containing protein 2 (QWRF2) from Arabidopsis thaliana (Mouse-ear cress).